We begin with the raw amino-acid sequence, 973 residues long: MAQLYYKKVNYSPYRDRIPLQIVRAETELSAEEKAFLNAVEKGDYATVKQALQEAEIYYNVNINCMDPLGRSALLIAIENENLEIMELLLNHSVYVGDALLYAIRKEVVGAVELLLSYRRPSGEKQVPTLMMDTQFSEFTPDITPIMLAAHTNNYEIIKLLVQKRVTIPRPHQIRCNCVECVSSSEVDSLRHSRSRLNIYKALASPSLIALSSEDPILTAFRLGWELKELSKVENEFKAEYEELSQQCKLFAKDLLDQARSSRELEIILNHRDDHSEELDPQKYHDLAKLKVAIKYHQKEFVAQPNCQQLLATLWYDGFPGWRRKHWVVKLLTCMTIGFLFPMLSIAYLISPRSNLGLFIKKPFIKFICHTASYLTFLFMLLLASQHIVRTDLHVQGPPPTVVEWMILPWVLGFIWGEIKEMWDGGFTEYIHDWWNLMDFAMNSLYLATISLKIVAYVKYNGSRPREEWEMWHPTLIAEALFAISNILSSLRLISLFTANSHLGPLQISLGRMLLDILKFLFIYCLVLLAFANGLNQLYFYYETRAIDEPNNCKGIRCEKQNNAFSTLFETLQSLFWSVFGLLNLYVTNVKARHEFTEFVGATMFGTYNVISLVVLLNMLIAMMNNSYQLIADHADIEWKFARTKLWMSYFDEGGTLPPPFNIIPSPKSFLYLGNWFNNTFCPKRDPDGRRRRRNLRSFTERNADSLIQNQHYQEVIRNLVKRYVAAMIRNSKTHEGLTEENFKELKQDISSFRYEVLDLLGNRKHPRSFSTSSTELSQRDDNNDGSGGARAKSKSVSFNLGCKKKTCHGPPLIRTMPRSSGAQGKSKAESSSKRSFMGPSLKKLGLLFSKFNGHMSEPSSEPMYTISDGIVQQHCMWQDIRYSQMEKGKAEACSQSEINLSEVELGEVQGAAQSSECPLACSSSLHCASSICSSNSKLLDSSEDVFETWGEACDLLMHKWGDGQEEQVTTRL.

Over 1–325 (MAQLYYKKVN…YDGFPGWRRK (325 aa)) the chain is Cytoplasmic. 4 ANK repeats span residues 30–60 (SAEE…IYYN), 69–97 (LGRS…VYVG), 98–124 (DALL…PSGE), and 141–170 (PDIT…TIPR). Residues H172, C176, C178, and C181 each coordinate Zn(2+). Residues 326 to 360 (HWVVKLLTCMTIGFLFPMLSIAYLISPRSNLGLFI) constitute an intramembrane region (discontinuously helical). Over 361–363 (KKP) the chain is Cytoplasmic. Residues 364 to 384 (FIKFICHTASYLTFLFMLLLA) form a helical membrane-spanning segment. The Extracellular segment spans residues 385 to 404 (SQHIVRTDLHVQGPPPTVVE). The helical transmembrane segment at 405–419 (WMILPWVLGFIWGEI) threads the bilayer. Residues E418, E421, N436, and D439 each contribute to the Ca(2+) site. Residues 420–433 (KEMWDGGFTEYIHD) lie on the Cytoplasmic side of the membrane. Residues 434–454 (WWNLMDFAMNSLYLATISLKI) form a helical membrane-spanning segment. Topologically, residues 455 to 476 (VAYVKYNGSRPREEWEMWHPTL) are extracellular. Residue N461 is glycosylated (N-linked (GlcNAc...) asparagine). The helical transmembrane segment at 477–497 (IAEALFAISNILSSLRLISLF) threads the bilayer. Residues 498–512 (TANSHLGPLQISLGR) are Cytoplasmic-facing. The chain crosses the membrane as a helical span at residues 513-535 (MLLDILKFLFIYCLVLLAFANGL). Residues 536-603 (NQLYFYYETR…HEFTEFVGAT (68 aa)) are Extracellular-facing. C553 and C558 are disulfide-bonded. A helical transmembrane segment spans residues 604 to 624 (MFGTYNVISLVVLLNMLIAMM). The Cytoplasmic portion of the chain corresponds to 625–973 (NNSYQLIADH…GQEEQVTTRL (349 aa)). Disordered regions lie at residues 766 to 794 (HPRS…RAKS) and 810 to 837 (GPPL…KRSF). The essential for binding to NHERF1 PDZ domain stretch occupies residues 971 to 973 (TRL).

This sequence belongs to the transient receptor (TC 1.A.4) family. STrpC subfamily. TRPC5 sub-subfamily. In terms of assembly, homotetramer. Heterotetramer with TRPC1 and/or TRPC4. Each subunit in the homomeric ion channel (via ANK repeats) interacts with one copy of GTP-bound GNAI3; the interaction is direct and activates the ion channel. Interacts with TRPC4AP. Interacts with NHERF1. Interacts with MX1 and RNF24. Interacts (via C-terminus) with CABP1. Interacts with SESTD1 (via the spectrin 1 repeat). Interacts with PLSCR1. Interacts with PKD2L2. As to expression, expressed in brain with higher levels in fetal brain. Found in cerebellum and occipital pole.

Its subcellular location is the cell membrane. The catalysed reaction is Ca(2+)(in) = Ca(2+)(out). With respect to regulation, activated by G-protein coupled receptors via direct interaction with GTP-bound GNAI3, which increases the channel sensitivity to phosphatidylinositol bisphosphate. May be activated by intracellular calcium store depletion. Calcium channel activity is enhanced by MYLK, that promotes its subcellular localization at the plasma membrane. Its function is as follows. Forms a receptor-activated non-selective calcium permeant cation channel. Mediates calcium-dependent phosphatidylserine externalization and apoptosis in neurons via its association with PLSCR1. Acts on distinct neuronal populations in the hypothalamus to regulate innate behaviors including feeding, anxiety (flight/fight/fear), socialization, and maternal care. The sequence is that of Short transient receptor potential channel 5 (TRPC5) from Homo sapiens (Human).